A 292-amino-acid chain; its full sequence is Diaminopimelate epimerase (292 aa).

Substrate is bound by residues Asn13, Gln46, and Asn66. Cys75 serves as the catalytic Proton donor. Residues 76–77 (GN), Asn166, Asn199, and 217–218 (ER) contribute to the substrate site. The Proton acceptor role is filled by Cys226. Residue 227 to 228 (GT) coordinates substrate.

The protein belongs to the diaminopimelate epimerase family. Homodimer.

The protein resides in the cytoplasm. It catalyses the reaction (2S,6S)-2,6-diaminopimelate = meso-2,6-diaminopimelate. The protein operates within amino-acid biosynthesis; L-lysine biosynthesis via DAP pathway; DL-2,6-diaminopimelate from LL-2,6-diaminopimelate: step 1/1. Functionally, catalyzes the stereoinversion of LL-2,6-diaminopimelate (L,L-DAP) to meso-diaminopimelate (meso-DAP), a precursor of L-lysine and an essential component of the bacterial peptidoglycan. This is Diaminopimelate epimerase from Ralstonia nicotianae (strain ATCC BAA-1114 / GMI1000) (Ralstonia solanacearum).